The following is a 219-amino-acid chain: Probable nicotinate-nucleotide adenylyltransferase (219 aa).

It belongs to the NadD family.

The catalysed reaction is nicotinate beta-D-ribonucleotide + ATP + H(+) = deamido-NAD(+) + diphosphate. It participates in cofactor biosynthesis; NAD(+) biosynthesis; deamido-NAD(+) from nicotinate D-ribonucleotide: step 1/1. Catalyzes the reversible adenylation of nicotinate mononucleotide (NaMN) to nicotinic acid adenine dinucleotide (NaAD). This is Probable nicotinate-nucleotide adenylyltransferase from Enterococcus faecalis (strain ATCC 700802 / V583).